Here is a 420-residue protein sequence, read N- to C-terminus: UDP-N-acetylglucosamine 1-carboxyvinyltransferase 2 (420 aa).

A phosphoenolpyruvate-binding site is contributed by 22 to 23 (KN). UDP-N-acetyl-alpha-D-glucosamine is bound at residue arginine 92. The active-site Proton donor is the cysteine 116. Cysteine 116 carries the post-translational modification 2-(S-cysteinyl)pyruvic acid O-phosphothioketal. UDP-N-acetyl-alpha-D-glucosamine-binding positions include 121–125 (RPIDL), aspartate 307, and isoleucine 329.

The protein belongs to the EPSP synthase family. MurA subfamily.

The protein localises to the cytoplasm. It carries out the reaction phosphoenolpyruvate + UDP-N-acetyl-alpha-D-glucosamine = UDP-N-acetyl-3-O-(1-carboxyvinyl)-alpha-D-glucosamine + phosphate. It participates in cell wall biogenesis; peptidoglycan biosynthesis. In terms of biological role, cell wall formation. Adds enolpyruvyl to UDP-N-acetylglucosamine. This chain is UDP-N-acetylglucosamine 1-carboxyvinyltransferase 2, found in Streptococcus thermophilus (strain ATCC BAA-250 / LMG 18311).